We begin with the raw amino-acid sequence, 413 residues long: Histidine decarboxylase (413 aa).

Histidine 129 is a substrate binding site. N6-(pyridoxal phosphate)lysine is present on lysine 242.

Belongs to the group II decarboxylase family. Pyridoxal 5'-phosphate serves as cofactor. In terms of tissue distribution, ripe fruits; not detected in leaves and unripe fruit.

It carries out the reaction L-histidine + H(+) = histamine + CO2. This chain is Histidine decarboxylase (HDC), found in Solanum lycopersicum (Tomato).